The following is a 645-amino-acid chain: MDQRPKFGMILFYIVLGVFLMVALRGLYTTDTNLSVPYNRFLEDVNDKKIIKIVIYDDGRIVYTTSESSKRSLETKVSPQTLSTDRFQNYIDQLVTDGVNVVYEKGNDSLFWVNLLGTIIPLAIIVFIWFFAMRSLSGRNSQAFTFTKSPAKKYLSNDKNVTFKDVAGVDEAIEELQDAVNYLKNPNAFSQTGARMPKGILLVGPPGTGKTLLARAVAGEANVPFFYISGSDFVELFVGVGAARVRDLFSQAKASAPSIIFIDEIDAVGRHRGAGLGGGHDEREQTLNQILVEMDGFDAKTGVIVMAATNRPDILDHALLRPGRFDKKITVDPPDVKGRAEILKIHMRGKPVDPDVDVWLLARRTPGFVGADLENLVNEAAILAARRKKKIIGMKELEEAIDRVIAGPARKSRIMNPKEKKIVAYHELGHAIVGLALPNAYPVHKVTVIPRGSASLGFTESLPSEDRYLVSRSEMLDNLAQILGGRAAEEIVFGEITTGAANDLERATQMARTMVCQLGMSDRLGPIAWGKEEGEVFLGRELTRMRNYSEEIASEIDNEVKKIVIEAHERARKLVEKFRDKLDKAAEYLIEKETITGKELAEIVGLAESGNYYRDPLAETKGSKRKVSAVSTNEEAKEGNEDEKN.

Topologically, residues 1–6 (MDQRPK) are cytoplasmic. The helical transmembrane segment at 7–27 (FGMILFYIVLGVFLMVALRGL) threads the bilayer. At 28–110 (YTTDTNLSVP…VVYEKGNDSL (83 aa)) the chain is on the periplasmic side. The chain crosses the membrane as a helical span at residues 111-131 (FWVNLLGTIIPLAIIVFIWFF). Residues 132–645 (AMRSLSGRNS…AKEGNEDEKN (514 aa)) are Cytoplasmic-facing. 204-211 (GPPGTGKT) provides a ligand contact to ATP. Position 426 (His426) interacts with Zn(2+). Glu427 is a catalytic residue. Residues His430 and Asp503 each contribute to the Zn(2+) site. The tract at residues 623–645 (SKRKVSAVSTNEEAKEGNEDEKN) is disordered. The span at 634–645 (EEAKEGNEDEKN) shows a compositional bias: basic and acidic residues.

The protein in the central section; belongs to the AAA ATPase family. It in the C-terminal section; belongs to the peptidase M41 family. In terms of assembly, homohexamer. It depends on Zn(2+) as a cofactor.

It localises to the cell inner membrane. Acts as a processive, ATP-dependent zinc metallopeptidase for both cytoplasmic and membrane proteins. Plays a role in the quality control of integral membrane proteins. The sequence is that of ATP-dependent zinc metalloprotease FtsH from Kosmotoga olearia (strain ATCC BAA-1733 / DSM 21960 / TBF 19.5.1).